The following is a 423-amino-acid chain: GTPase Obg (423 aa).

In terms of domain architecture, Obg spans 1–158; that stretch reads MFYDEAKIYV…RWLVLELKLL (158 aa). In terms of domain architecture, OBG-type G spans 159-328; it reads ADVGLIGLPN…LLYHVSGLLA (170 aa). Residues 165-172, 190-194, 212-215, 281-284, and 309-311 contribute to the GTP site; these read GLPNAGKS, FTTLT, DIPG, NKMD, and SAA. 2 residues coordinate Mg(2+): S172 and T192. Residues 336-421 enclose the OCT domain; it reads VTAPEEEKVT…IGKFEFEYVE (86 aa).

Belongs to the TRAFAC class OBG-HflX-like GTPase superfamily. OBG GTPase family. As to quaternary structure, monomer. Mg(2+) serves as cofactor.

The protein resides in the cytoplasm. In terms of biological role, an essential GTPase which binds GTP, GDP and possibly (p)ppGpp with moderate affinity, with high nucleotide exchange rates and a fairly low GTP hydrolysis rate. Plays a role in control of the cell cycle, stress response, ribosome biogenesis and in those bacteria that undergo differentiation, in morphogenesis control. This is GTPase Obg from Moorella thermoacetica (strain ATCC 39073 / JCM 9320).